The following is a 280-amino-acid chain: Golgi to ER traffic protein 2 (280 aa).

Basic and acidic residues-rich tracts occupy residues 1 to 17 (MSLSEAEKRKILRERRQ), 44 to 62 (SALDEKPEVVEEIPREAVK), and 71 to 80 (AKKESTAQAK). The tract at residues 1–80 (MSLSEAEKRK…AKKESTAQAK (80 aa)) is disordered. Over 1–146 (MSLSEAEKRK…VEYHKYRVNT (146 aa)) the chain is Cytoplasmic. The helical transmembrane segment at 147 to 166 (LTAKTTLVKWIVLLAYIFLL) threads the bilayer. Topologically, residues 167–191 (TRTDDTYFPFVVRSYLPEVFTSQSS) are lumenal. A helical membrane pass occupies residues 192–211 (FFSIFLTFEILATSIYYQLS). Topologically, residues 212-258 (VGVERETGVKTLQDTSKIVSLVSMVPEGILPIADLRGKVILAMKYWN) are cytoplasmic. The helical transmembrane segment at 259 to 279 (IIAMMIGDVCFVLVAIGLVSQ) threads the bilayer. Position 280 (isoleucine 280) is a topological domain, lumenal.

It belongs to the GET2 family. Component of the Golgi to ER traffic (GET) complex, which is composed of GET1, GET2 and GET3. Within the complex, GET1 and GET2 form a heterotetramer which is stabilized by phosphatidylinositol binding and which binds to the GET3 homodimer.

The protein localises to the endoplasmic reticulum membrane. It is found in the golgi apparatus membrane. Functionally, required for the post-translational delivery of tail-anchored (TA) proteins to the endoplasmic reticulum. Together with GET1, acts as a membrane receptor for soluble GET3, which recognizes and selectively binds the transmembrane domain of TA proteins in the cytosol. The GET complex cooperates with the HDEL receptor ERD2 to mediate the ATP-dependent retrieval of resident ER proteins that contain a C-terminal H-D-E-L retention signal from the Golgi to the ER. This Candida glabrata (strain ATCC 2001 / BCRC 20586 / JCM 3761 / NBRC 0622 / NRRL Y-65 / CBS 138) (Yeast) protein is Golgi to ER traffic protein 2.